Here is a 228-residue protein sequence, read N- to C-terminus: A-type ATP synthase subunit D (228 aa).

Positions 205–214 (KKEEEEKAEA) are enriched in basic and acidic residues. Positions 205–228 (KKEEEEKAEAAAEAAAVEDPEPAD) are disordered.

This sequence belongs to the V-ATPase D subunit family. As to quaternary structure, has multiple subunits with at least A(3), B(3), C, D, E, F, H, I and proteolipid K(x).

It localises to the cell membrane. Functionally, component of the A-type ATP synthase that produces ATP from ADP in the presence of a proton gradient across the membrane. The sequence is that of A-type ATP synthase subunit D from Halorubrum lacusprofundi (strain ATCC 49239 / DSM 5036 / JCM 8891 / ACAM 34).